The chain runs to 550 residues: MVPKADSGAFLLLFLLVLTVTEPLRPELRCNPGQFACRSGTIQCIPLPWQCDGWATCEDESDEANCPEVTGEVRPHHGKEAVDPRQGRARGGDPSHFHAVNVAQPVRFSSFLGKCPTGWHHYEGTASCYRVYLSGENYWDAAQTCQRLNGSLATFSTDQELRFVLAQEWDQPERSFGWKDQRKLWVGYQYVITGRNRSLEGRWEVAFKGSSEVFLPPDPIFASAMSENDNVFCAQLQCFHFPTLRHHDLHSWHAESCYEKSSFLCKRSQTCVDIKDNVVDEGFYFTPKGDDPCLSCTCHGGEPEMCVAALCERPQGCQQYRKDPKECCKFMCLDPDGNSLFDSMASGMRLVVSCISSFLILSLLLFMVHRLRQRRRERIESLIGANLHHFNLGRRIPGFDYGPDGFGTGLTPLHLSDDGEGGTFHFHDPPPPYTAYKYPDIGQPDDPPPPYEASIHPDSVFYDPADDDAFEPVEVSLPAPGDGGSEGALLRRLEQPLPTAGASLADLEDSADSSSALLVPPDPAQSGSTPAAEALPGGGRHSRSSLNTVV.

The first 20 residues, 1–20, serve as a signal peptide directing secretion; the sequence is MVPKADSGAFLLLFLLVLTV. Residues 21–349 lie on the Extracellular side of the membrane; the sequence is TEPLRPELRC…LFDSMASGMR (329 aa). The LDL-receptor class A domain occupies 28 to 68; sequence LRCNPGQFACRSGTIQCIPLPWQCDGWATCEDESDEANCPE. Intrachain disulfides connect Cys-30–Cys-44, Cys-37–Cys-57, and Cys-51–Cys-66. The disordered stretch occupies residues 69–92; that stretch reads VTGEVRPHHGKEAVDPRQGRARGG. Residues 71–92 are compositionally biased toward basic and acidic residues; it reads GEVRPHHGKEAVDPRQGRARGG. The C-type lectin domain occupies 115–241; it reads CPTGWHHYEG…FCAQLQCFHF (127 aa). Cystine bridges form between Cys-145/Cys-265 and Cys-233/Cys-257. Residues Asn-149 and Asn-196 are each glycosylated (N-linked (GlcNAc...) asparagine). Residues 270 to 333 enclose the VWFC domain; that stretch reads TCVDIKDNVV…PKECCKFMCL (64 aa). Residues 350 to 368 traverse the membrane as a helical segment; it reads LVVSCISSFLILSLLLFMV. Residues 369–550 are Cytoplasmic-facing; sequence HRLRQRRRER…HSRSSLNTVV (182 aa). Residue Ser-381 is modified to Phosphoserine. The tract at residues 500–550 is disordered; the sequence is AGASLADLEDSADSSSALLVPPDPAQSGSTPAAEALPGGGRHSRSSLNTVV.

As to expression, predominantly expressed in brain, heart, lung and fetal kidney. Low levels in liver and adult kidney.

Its subcellular location is the membrane. Putative adhesion receptor, that could be involved in cell-cell or cell-matrix interactions required for normal cell differentiation and migration. The polypeptide is Integral membrane protein DGCR2/IDD (DGCR2) (Homo sapiens (Human)).